A 57-amino-acid chain; its full sequence is Small ribosomal subunit protein eS27 (57 aa).

Zn(2+) is bound by residues C10, C13, C29, and C32. A C4-type zinc finger spans residues 10–32; sequence CPDCENEQTVFGKASTEVACAVC.

This sequence belongs to the eukaryotic ribosomal protein eS27 family. Part of the 30S ribosomal subunit. Zn(2+) is required as a cofactor.

The protein is Small ribosomal subunit protein eS27 of Halobacterium salinarum (strain ATCC 29341 / DSM 671 / R1).